Reading from the N-terminus, the 24-residue chain is Neurotoxin-2 (24 aa).

Positions 1 to 24 (EDGYLLNRDTGCKVSCGTCRYCND) constitute an LCN-type CS-alpha/beta domain.

Belongs to the long (4 C-C) scorpion toxin superfamily. Sodium channel inhibitor family. Alpha subfamily. In terms of tissue distribution, expressed by the venom gland.

It is found in the secreted. Functionally, binds to sodium channels (Nav) and inhibits the inactivation of the activated channels, thereby blocking neuronal transmission. This toxin is active against mammals. The protein is Neurotoxin-2 of Hottentotta tamulus (Eastern Indian scorpion).